The sequence spans 179 residues: Large ribosomal subunit protein uL6 (179 aa).

The tract at residues 151–179 is disordered; it reads RKPEPYKGKGIKYDNEQIRRKAGKSGGKK. The span at 152–169 shows a compositional bias: basic and acidic residues; the sequence is KPEPYKGKGIKYDNEQIR. Basic residues predominate over residues 170 to 179; that stretch reads RKAGKSGGKK.

This sequence belongs to the universal ribosomal protein uL6 family. As to quaternary structure, part of the 50S ribosomal subunit.

Its function is as follows. This protein binds to the 23S rRNA, and is important in its secondary structure. It is located near the subunit interface in the base of the L7/L12 stalk, and near the tRNA binding site of the peptidyltransferase center. The chain is Large ribosomal subunit protein uL6 from Nitratidesulfovibrio vulgaris (strain ATCC 29579 / DSM 644 / CCUG 34227 / NCIMB 8303 / VKM B-1760 / Hildenborough) (Desulfovibrio vulgaris).